Consider the following 1029-residue polypeptide: Eukaryotic translation initiation factor 3 subunit A (1029 aa).

A coiled-coil region spans residues 92 to 121 (LKKFIELAEQKVTEAQAKADEIQSSLESAA). Positions 339–523 (MTKAASFVLL…GVLTFESDIF (185 aa)) constitute a PCI domain. Residues 606 to 903 (TRRAIIEKRK…EEEAEQRRAA (298 aa)) adopt a coiled-coil conformation. Basic and acidic residues-rich tracts occupy residues 621–632 (ALQKKQREEENR), 644–666 (EQQR…EQDR), 797–901 (TEKR…EQRR), and 913–924 (GPAREASPERTA). Disordered regions lie at residues 621-666 (ALQK…EQDR) and 797-1029 (TEKR…KQQQ). Residues 943-960 (AKAAASAGEQPAAAQEAT) show a composition bias toward low complexity. The span at 977–993 (ATRDGPSDSRDLSHARE) shows a compositional bias: basic and acidic residues.

It belongs to the eIF-3 subunit A family. In terms of assembly, component of the eukaryotic translation initiation factor 3 (eIF-3) complex.

It is found in the cytoplasm. In terms of biological role, RNA-binding component of the eukaryotic translation initiation factor 3 (eIF-3) complex, which is involved in protein synthesis of a specialized repertoire of mRNAs and, together with other initiation factors, stimulates binding of mRNA and methionyl-tRNAi to the 40S ribosome. The eIF-3 complex specifically targets and initiates translation of a subset of mRNAs involved in cell proliferation. This is Eukaryotic translation initiation factor 3 subunit A from Coccidioides immitis (strain RS) (Valley fever fungus).